The sequence spans 244 residues: tRNA pseudouridine synthase A (244 aa).

D52 functions as the Nucleophile in the catalytic mechanism. Y110 provides a ligand contact to substrate.

Belongs to the tRNA pseudouridine synthase TruA family. Homodimer.

It catalyses the reaction uridine(38/39/40) in tRNA = pseudouridine(38/39/40) in tRNA. In terms of biological role, formation of pseudouridine at positions 38, 39 and 40 in the anticodon stem and loop of transfer RNAs. The protein is tRNA pseudouridine synthase A of Geotalea daltonii (strain DSM 22248 / JCM 15807 / FRC-32) (Geobacter daltonii).